The following is a 730-amino-acid chain: Wall-associated receptor kinase-like 1 (730 aa).

The signal sequence occupies residues 1-25 (MKTKTSIFQFIVASVLTLLINDSSA). Topologically, residues 26 to 358 (ATPPPPISNS…KPTKPPVLQG (333 aa)) are extracellular. N-linked (GlcNAc...) asparagine glycosylation is found at Asn34, Asn40, Asn70, Asn77, Asn92, Asn119, Asn132, Asn211, Asn233, Asn269, and Asn281. The segment at 282–341 (CSCEYDYFSGMSYRNCYCDYGYTGNPYLRGGCVDTDSCEGNHNCGEDAHCVNMPGPMSMC) is atypical EGF-like. 3 cysteine pairs are disulfide-bonded: Cys284–Cys297, Cys319–Cys331, and Cys325–Cys341. Residues 359–379 (ILIGLSGLVFFVGLFWLFKLI) form a helical membrane-spanning segment. Residues 380-730 (KKRRNINRSK…DQPMAINNKR (351 aa)) lie on the Cytoplasmic side of the membrane. Residues 429-702 (FSIDRVLGQG…KEVSNELERI (274 aa)) form the Protein kinase domain. ATP is bound by residues 435 to 443 (LGQGGQGTV) and Lys457. Tyr502 is modified (phosphotyrosine). Residue Asp554 is the Proton acceptor of the active site. Residues Thr588 and Thr593 each carry the phosphothreonine modification. Tyr601 carries the post-translational modification Phosphotyrosine. Residues 685–730 (KGKNRPNMKEVSNELERIRSSPEDLDVRTENEDEEEDQPMAINNKR) are disordered. Residues 691 to 714 (NMKEVSNELERIRSSPEDLDVRTE) show a composition bias toward basic and acidic residues.

It belongs to the protein kinase superfamily. Ser/Thr protein kinase family. In terms of tissue distribution, preferentially expressed in roots and flowers.

It is found in the membrane. It catalyses the reaction L-seryl-[protein] + ATP = O-phospho-L-seryl-[protein] + ADP + H(+). The enzyme catalyses L-threonyl-[protein] + ATP = O-phospho-L-threonyl-[protein] + ADP + H(+). Serine/threonine-protein kinase that may function as a signaling receptor of extracellular matrix component. This is Wall-associated receptor kinase-like 1 (WAKL1) from Arabidopsis thaliana (Mouse-ear cress).